The sequence spans 739 residues: Phosphoribosylformylglycinamidine synthase subunit PurL (739 aa).

Residue histidine 54 is part of the active site. Residues tyrosine 57 and lysine 96 each contribute to the ATP site. Glutamate 98 is a Mg(2+) binding site. Residues 99-102 (SHNH) and arginine 121 contribute to the substrate site. Catalysis depends on histidine 100, which acts as the Proton acceptor. Aspartate 122 provides a ligand contact to Mg(2+). Residue glutamine 245 coordinates substrate. Aspartate 273 lines the Mg(2+) pocket. A substrate-binding site is contributed by 317 to 319 (ESQ). Residues aspartate 500 and glycine 537 each coordinate ATP. Mg(2+) is bound at residue asparagine 538. A substrate-binding site is contributed by serine 540.

The protein belongs to the FGAMS family. In terms of assembly, monomer. Part of the FGAM synthase complex composed of 1 PurL, 1 PurQ and 2 PurS subunits.

The protein localises to the cytoplasm. It carries out the reaction N(2)-formyl-N(1)-(5-phospho-beta-D-ribosyl)glycinamide + L-glutamine + ATP + H2O = 2-formamido-N(1)-(5-O-phospho-beta-D-ribosyl)acetamidine + L-glutamate + ADP + phosphate + H(+). It participates in purine metabolism; IMP biosynthesis via de novo pathway; 5-amino-1-(5-phospho-D-ribosyl)imidazole from N(2)-formyl-N(1)-(5-phospho-D-ribosyl)glycinamide: step 1/2. Functionally, part of the phosphoribosylformylglycinamidine synthase complex involved in the purines biosynthetic pathway. Catalyzes the ATP-dependent conversion of formylglycinamide ribonucleotide (FGAR) and glutamine to yield formylglycinamidine ribonucleotide (FGAM) and glutamate. The FGAM synthase complex is composed of three subunits. PurQ produces an ammonia molecule by converting glutamine to glutamate. PurL transfers the ammonia molecule to FGAR to form FGAM in an ATP-dependent manner. PurS interacts with PurQ and PurL and is thought to assist in the transfer of the ammonia molecule from PurQ to PurL. The chain is Phosphoribosylformylglycinamidine synthase subunit PurL from Bacillus cereus (strain ATCC 14579 / DSM 31 / CCUG 7414 / JCM 2152 / NBRC 15305 / NCIMB 9373 / NCTC 2599 / NRRL B-3711).